The primary structure comprises 354 residues: UPF0496 protein At4g34330 (354 aa).

Helical transmembrane passes span 200 to 220 (IIFM…ATMA) and 222 to 242 (PHVA…GKWI). Positions 270 to 341 (AVQDLNNIKD…CSTDIRRART (72 aa)) form a coiled coil.

Belongs to the UPF0496 family.

Its subcellular location is the membrane. The chain is UPF0496 protein At4g34330 from Arabidopsis thaliana (Mouse-ear cress).